We begin with the raw amino-acid sequence, 167 residues long: uncharacterized protein (167 aa).

The tract at residues 148–167 (NKESRGENDGGEERESANIY) is disordered.

This is an uncharacterized protein from Homo sapiens (Human).